The primary structure comprises 146 residues: Large ribosomal subunit protein mL41 (146 aa).

The transit peptide at 1 to 16 directs the protein to the mitochondrion; it reads MKGSPISQFSKTSINA.

The protein belongs to the mitochondrion-specific ribosomal protein mL41 family. As to quaternary structure, component of the mitochondrial large ribosomal subunit (mt-LSU). Mature yeast 74S mitochondrial ribosomes consist of a small (37S) and a large (54S) subunit. The 37S small subunit contains a 15S ribosomal RNA (15S mt-rRNA) and 34 different proteins. The 54S large subunit contains a 21S rRNA (21S mt-rRNA) and 46 different proteins.

It is found in the mitochondrion. Component of the mitochondrial ribosome (mitoribosome), a dedicated translation machinery responsible for the synthesis of mitochondrial genome-encoded proteins, including at least some of the essential transmembrane subunits of the mitochondrial respiratory chain. The mitoribosomes are attached to the mitochondrial inner membrane and translation products are cotranslationally integrated into the membrane. The chain is Large ribosomal subunit protein mL41 (MRPL27) from Saccharomyces cerevisiae (strain ATCC 204508 / S288c) (Baker's yeast).